Consider the following 425-residue polypeptide: Formyl-CoA:oxalate CoA-transferase (425 aa).

Residues 17–18 (QS), arginine 38, 72–75 (LDTK), 96–98 (NFG), arginine 104, and 136–139 (KVYE) contribute to the CoA site. Aspartate 168 functions as the Nucleophile in the catalytic mechanism. Residue 247–249 (GGQ) coordinates substrate.

It belongs to the CoA-transferase III family. Frc subfamily. In terms of assembly, homodimer.

The enzyme catalyses formyl-CoA + oxalate = oxalyl-CoA + formate. Its pathway is metabolic intermediate degradation; oxalate degradation; CO(2) and formate from oxalate: step 1/2. Its function is as follows. Involved in the catabolism of oxalate and in the adapatation to low pH via the induction of the oxalate-dependent acid tolerance response (ATR). Catalyzes the transfer of the CoA moiety from formyl-CoA to oxalate. The sequence is that of Formyl-CoA:oxalate CoA-transferase from Rhodopseudomonas palustris (strain TIE-1).